The following is a 411-amino-acid chain: uncharacterized protein (411 aa).

Residues 32 to 108 (LGGDPAPKPT…PEHPRRIPIP (77 aa)) are disordered.

This is an uncharacterized protein from Ictalurid herpesvirus 1 (strain Auburn) (IcHV-1).